Here is a 201-residue protein sequence, read N- to C-terminus: UPF0177 protein YajF (201 aa).

The next 5 helical transmembrane spans lie at 10-30 (TVIL…YVEY), 44-64 (ITVN…MLGI), 82-102 (ILIL…SQFI), 119-139 (VMGS…APIL), and 159-179 (FVFS…VFLI).

The protein belongs to the UPF0177 family.

It is found in the cell membrane. The sequence is that of UPF0177 protein YajF (yajF) from Lactococcus lactis subsp. lactis (strain IL1403) (Streptococcus lactis).